Reading from the N-terminus, the 252-residue chain is Probable truncated L-gulonolactone oxidase 7, mitochondrial (252 aa).

The N-terminal 102 residues, 1–102, are a transit peptide targeting the mitochondrion; that stretch reads MKRSMRSHLA…ELNYGVLVRY (102 aa).

Belongs to the oxygen-dependent FAD-linked oxidoreductase family.

The protein localises to the mitochondrion. The enzyme catalyses L-gulono-1,4-lactone + O2 = L-ascorbate + H2O2 + H(+). The protein operates within cofactor biosynthesis; L-ascorbate biosynthesis. In terms of biological role, may be involved in the biosynthesis of ascorbic acid. The chain is Probable truncated L-gulonolactone oxidase 7, mitochondrial from Arabidopsis thaliana (Mouse-ear cress).